The sequence spans 343 residues: Nod factor export ATP-binding protein I (343 aa).

Positions 1–14 (MQLLTRANVSSSPS) are enriched in polar residues. The disordered stretch occupies residues 1–38 (MQLLTRANVSSSPSRRPESNALKQKCHGHSNADNSLSR). The ABC transporter domain maps to 45 to 275 (IELTNVSKSY…QIGCDVIEIY (231 aa)). 77-84 (GPNGAGKS) is a binding site for ATP.

It belongs to the ABC transporter superfamily. Lipooligosaccharide exporter (TC 3.A.1.102) family. In terms of assembly, the complex is composed of two ATP-binding proteins (NodI) and two transmembrane proteins (NodJ).

The protein localises to the cell inner membrane. Part of the ABC transporter complex NodIJ involved in the export of the nodulation factors (Nod factors), the bacterial signal molecules that induce symbiosis and subsequent nodulation induction. Nod factors are LCO (lipo-chitin oligosaccharide), a modified beta-1,4-linked N-acetylglucosamine oligosaccharide. This subunit is responsible for energy coupling to the transport system. In Sinorhizobium fredii (strain NBRC 101917 / NGR234), this protein is Nod factor export ATP-binding protein I.